A 273-amino-acid polypeptide reads, in one-letter code: MRFSAIFTLGLAGTALATPLVERAGSSPTDIISGISDKTDALDSAIKAYNGGDPSKVESASADLISTITKGTDAIKSGDDISTTDALALPEPVQALTKKVEQAIDDIIAKKDKFVEAGAGGKVKDSLNQQKSAADGLASAITSKVPESLKEIAQSLSAGISTAIQKGVDAYKDVSDSAPSSSAGSSASATATGSASETGSASTTGSASATSSSVIPTSSGAASSSAAPSGSSTPTGSGSASATSPPLATGAANKATIGYSLGAVAMAAIAVAV.

Residues 1 to 17 form the signal peptide; sequence MRFSAIFTLGLAGTALA. A disordered region spans residues 173 to 247; it reads DVSDSAPSSS…GSASATSPPL (75 aa). Positions 177–247 are enriched in low complexity; sequence SAPSSSAGSS…GSASATSPPL (71 aa).

The protein belongs to the cell wall mannoprotein 1 family. Galactomannoprotein, glycosylated.

It localises to the secreted. The protein localises to the cell wall. In terms of biological role, constitutive protein of the cell wall. Antigen target of host humoral immune response. The chain is Cell wall mannoprotein 1 from Aspergillus flavus.